A 429-amino-acid polypeptide reads, in one-letter code: 3-phosphoshikimate 1-carboxyvinyltransferase (429 aa).

3-phosphoshikimate contacts are provided by Lys-23, Ser-24, and Arg-28. Lys-23 is a phosphoenolpyruvate binding site. The phosphoenolpyruvate site is built by Gly-95 and Arg-123. Ser-168, Gln-170, Asp-316, and Lys-343 together coordinate 3-phosphoshikimate. Position 170 (Gln-170) interacts with phosphoenolpyruvate. Asp-316 serves as the catalytic Proton acceptor. Residues Arg-347 and Arg-389 each coordinate phosphoenolpyruvate.

The protein belongs to the EPSP synthase family. Monomer.

The protein localises to the cytoplasm. The enzyme catalyses 3-phosphoshikimate + phosphoenolpyruvate = 5-O-(1-carboxyvinyl)-3-phosphoshikimate + phosphate. It participates in metabolic intermediate biosynthesis; chorismate biosynthesis; chorismate from D-erythrose 4-phosphate and phosphoenolpyruvate: step 6/7. Catalyzes the transfer of the enolpyruvyl moiety of phosphoenolpyruvate (PEP) to the 5-hydroxyl of shikimate-3-phosphate (S3P) to produce enolpyruvyl shikimate-3-phosphate and inorganic phosphate. The polypeptide is 3-phosphoshikimate 1-carboxyvinyltransferase (Bacillus cereus (strain G9842)).